Reading from the N-terminus, the 208-residue chain is Protein-L-isoaspartate O-methyltransferase (208 aa).

Residue Ser-59 is part of the active site.

The protein belongs to the methyltransferase superfamily. L-isoaspartyl/D-aspartyl protein methyltransferase family.

The protein resides in the cytoplasm. The enzyme catalyses [protein]-L-isoaspartate + S-adenosyl-L-methionine = [protein]-L-isoaspartate alpha-methyl ester + S-adenosyl-L-homocysteine. Catalyzes the methyl esterification of L-isoaspartyl residues in peptides and proteins that result from spontaneous decomposition of normal L-aspartyl and L-asparaginyl residues. It plays a role in the repair and/or degradation of damaged proteins. This chain is Protein-L-isoaspartate O-methyltransferase, found in Serratia proteamaculans (strain 568).